The chain runs to 282 residues: Phosphatidylglycerol--prolipoprotein diacylglyceryl transferase (282 aa).

4 helical membrane passes run 19 to 39, 59 to 79, 90 to 110, and 120 to 140; these read IGPI…LIGV, LSIW…VLFQ, IIAI…GTLA, and VPFW…QAIG. Arg141 serves as a coordination point for a 1,2-diacyl-sn-glycero-3-phospho-(1'-sn-glycerol). A run of 3 helical transmembrane segments spans residues 181–201, 212–232, and 245–265; these read TFLY…TLFF, VGTL…WIEG, and IAQV…AWLY.

It belongs to the Lgt family.

The protein localises to the cell inner membrane. The enzyme catalyses L-cysteinyl-[prolipoprotein] + a 1,2-diacyl-sn-glycero-3-phospho-(1'-sn-glycerol) = an S-1,2-diacyl-sn-glyceryl-L-cysteinyl-[prolipoprotein] + sn-glycerol 1-phosphate + H(+). It participates in protein modification; lipoprotein biosynthesis (diacylglyceryl transfer). Its function is as follows. Catalyzes the transfer of the diacylglyceryl group from phosphatidylglycerol to the sulfhydryl group of the N-terminal cysteine of a prolipoprotein, the first step in the formation of mature lipoproteins. This Trichormus variabilis (strain ATCC 29413 / PCC 7937) (Anabaena variabilis) protein is Phosphatidylglycerol--prolipoprotein diacylglyceryl transferase.